Reading from the N-terminus, the 700-residue chain is Suprabasin (700 aa).

A signal peptide spans 1–23; sequence MYLVSLLSSCCLLVLLGTLPARA. Disordered stretches follow at residues 133 to 158, 183 to 258, and 283 to 391; these read QGGS…VANK, HAFG…VADK, and HAFG…GAHH. A coiled-coil region spans residues 488–546; it reads KEAEKVAHGVQNGVNQAQKEAEKVAHGVQNGVNQAQKEAEKVAHGVQNGVNQAQKEAEK. Residues 641-654 show a composition bias toward polar residues; it reads GVNQPSKEANQLLN. Positions 641–669 are disordered; the sequence is GVNQPSKEANQLLNGSHQGQGGYGGQHGG. Residues 658–668 show a composition bias toward gly residues; that stretch reads QGQGGYGGQHG.

Detected in epidermis, in suprabasal keratinocytes. Detected in suprabasal layers of embryonic epidermis and in stratified layers of embryonic tongue and palate. Detected in adult stomach.

Its subcellular location is the secreted. In Mus musculus (Mouse), this protein is Suprabasin (Sbsn).